The chain runs to 698 residues: UV radiation resistance-associated protein (698 aa).

Residues Met1–Pro10 are compositionally biased toward low complexity. Positions Met1–Ala21 are disordered. Positions Thr23–Asn149 constitute a C2 domain. The tract at residues His199 to Gln268 is sufficient for interaction with STX7; VTI1B AND STX8. Residues Arg200–Glu304 adopt a coiled-coil conformation. The segment at Met269–Leu441 is sufficient for interaction with VPS16, required for interaction with CEP63. The required for interaction with PRKDC, XRCC6 and XRCC5 stretch occupies residues Gly442–Lys698. Disordered regions lie at residues Pro477–Asp551 and Val565–Glu586. Phosphoserine is present on Ser492. Ser497 carries the phosphoserine; by MTOR modification. At Ser507 the chain carries Phosphoserine. Thr517 carries the post-translational modification Phosphothreonine. 5 positions are modified to phosphoserine: Ser521, Ser548, Ser549, Ser570, and Ser688.

Component of the PI3K (PI3KC3/PI3K-III/class III phosphatidylinositol 3-kinase) complex II (PI3KC3-C2) in which the core composed of the catalytic subunit PIK3C3, the regulatory subunit PIK3R4 and BECN1 is associated with UVRAG; in the complex interacts directly with BECN1. PI3KC3-C2 can associate with further regulatory subunits such as RUBCN and probably SH3GLB1/Bif-1. Interacts with SH3GLB1; UVRAG bridges the interaction to BECN1 indicative for an association with the PI3K complex PI3KC3-C2. Interacts with RINT1. Associates with the NRZ complex under basal conditions and dissociates from it under autophagy conditions to associate with the PI3K complex; these complex associations seem to be mutually exclusive. Interacts with VPS16; VPS11; VPS18; VPS33 (VPS33A or VPS33B) and VPS39; indicative for an association with a class C Vps tethering complex (possibly the HOPS complex). Interacts with RAB7A; RAB7A competes with UVRAG for RUBCN binding. Interacts with STX7, VTI1B, STX8. Interacts with PRKDC, XRCC6 and XRCC5; indicative for an association with the DNA-dependent protein kinase complex DNA-PK. Interacts with CEP63. Directly interacts with FEZ1 and SCOC; the interaction with SCOC is reduced by amino acid starvation, but the complex is stabilized in the presence of FEZ1. Interacts with BECN1P1/BECN2. Interacts with SLAMF1. Interacts with RUBCNL/PACER; promoting targeting of UVRAG to autophagosome. Interacts with WNK1. Post-translationally, phosphorylated at Ser-497 by MTOR under basal conditions; increases the interaction with RUBCN implicated in inhibitory effect of RUBCN on PI3KC3 and decreases interaction with RAB7A, and VPS16 and VPS39 (indicative for a class C Vps complex, possibly the HOPS complex).

Its subcellular location is the late endosome. The protein localises to the lysosome. It localises to the cytoplasmic vesicle. The protein resides in the autophagosome. It is found in the early endosome. Its subcellular location is the endoplasmic reticulum. The protein localises to the midbody. It localises to the chromosome. The protein resides in the centromere. Its function is as follows. Versatile protein that is involved in regulation of different cellular pathways implicated in membrane trafficking. Involved in regulation of the COPI-dependent retrograde transport from Golgi and the endoplasmic reticulum by associating with the NRZ complex; the function is dependent on its binding to phosphatidylinositol 3-phosphate (PtdIns(3)P). During autophagy acts as a regulatory subunit of the alternative PI3K complex II (PI3KC3-C2) that mediates formation of phosphatidylinositol 3-phosphate and is believed to be involved in maturation of autophagosomes and endocytosis. Activates lipid kinase activity of PIK3C3. Involved in the regulation of degradative endocytic trafficking and cytokinesis, and in regulation of ATG9A transport from the Golgi to the autophagosome; the functions seems to implicate its association with PI3KC3-C2. Involved in maturation of autophagosomes and degradative endocytic trafficking independently of BECN1 but depending on its association with a class C Vps complex (possibly the HOPS complex); the association is also proposed to promote autophagosome recruitment and activation of Rab7 and endosome-endosome fusion events. Enhances class C Vps complex (possibly HOPS complex) association with a SNARE complex and promotes fusogenic SNARE complex formation during late endocytic membrane fusion. In case of negative-strand RNA virus infection is required for efficient virus entry, promotes endocytic transport of virions and is implicated in a VAMP8-specific fusogenic SNARE complex assembly. Involved in maintaining chromosomal stability. Promotes DNA double-strand break (DSB) repair by association with DNA-dependent protein kinase complex DNA-PK and activating it in non-homologous end joining (NHEJ). Required for centrosome stability and proper chromosome segregation. The polypeptide is UV radiation resistance-associated protein (Uvrag) (Mus musculus (Mouse)).